We begin with the raw amino-acid sequence, 167 residues long: 2-amino-4-hydroxy-6-hydroxymethyldihydropteridine pyrophosphokinase (167 aa).

It belongs to the HPPK family.

The enzyme catalyses 6-hydroxymethyl-7,8-dihydropterin + ATP = (7,8-dihydropterin-6-yl)methyl diphosphate + AMP + H(+). The protein operates within cofactor biosynthesis; tetrahydrofolate biosynthesis; 2-amino-4-hydroxy-6-hydroxymethyl-7,8-dihydropteridine diphosphate from 7,8-dihydroneopterin triphosphate: step 4/4. Catalyzes the transfer of pyrophosphate from adenosine triphosphate (ATP) to 6-hydroxymethyl-7,8-dihydropterin, an enzymatic step in folate biosynthesis pathway. This Bacillus subtilis (strain 168) protein is 2-amino-4-hydroxy-6-hydroxymethyldihydropteridine pyrophosphokinase (folK).